Reading from the N-terminus, the 1097-residue chain is FHIP family protein GK23746 (1097 aa).

Polar residues predominate over residues 1 to 21; that stretch reads MSWLRSSPLRQSLTRTTSSGN. The disordered stretch occupies residues 1 to 25; it reads MSWLRSSPLRQSLTRTTSSGNGIRP. Ser491 is subject to Phosphoserine. 3 disordered regions span residues 639–684, 820–856, and 932–1042; these read DVSA…SGRR, NENSPLHQQQSLQHPHHLQPLPAPQQTGAGAQQRSAY, and NNQQ…SEPV. Over residues 641-654 the composition is skewed to low complexity; the sequence is SASSGNGTGSVVVG. Ser823 is modified (phosphoserine). 2 stretches are compositionally biased toward low complexity: residues 824–852 and 932–948; these read PLHQQQSLQHPHHLQPLPAPQQTGAGAQQ and NNQQSSNQTHLNSSSSS. Over residues 949–962 the composition is skewed to polar residues; it reads AVTTCETSLSTQPH. Residues 973 to 985 show a composition bias toward low complexity; it reads TTSSTISTSSGTT. The span at 986–995 shows a compositional bias: gly residues; the sequence is AGSGGGGGSG. Composition is skewed to low complexity over residues 996–1006 and 1013–1022; these read SNSSFSIGGST and SNNTTNSSST.

Belongs to the FHIP family.

The chain is FHIP family protein GK23746 from Drosophila willistoni (Fruit fly).